The chain runs to 598 residues: Eukaryotic translation initiation factor 3 subunit D (598 aa).

The segment at 104 to 178 is disordered; that stretch reads VKTRGFGRGG…YDKPQRNRDS (75 aa). The span at 109–132 shows a compositional bias: gly residues; that stretch reads FGRGGGTIFRGRGQRGGAQRGRGG. Residues 165–177 show a composition bias toward basic and acidic residues; that stretch reads GWKDYDKPQRNRD. The RNA gate stretch occupies residues 304 to 318; sequence SIDLVTVNENAADAP. Residues 574–598 are disordered; sequence NTFEEEDDTGAKAEKDEESEEKDEE. Residues 589–598 are compositionally biased toward acidic residues; the sequence is DEESEEKDEE.

The protein belongs to the eIF-3 subunit D family. In terms of assembly, component of the eukaryotic translation initiation factor 3 (eIF-3) complex.

It is found in the cytoplasm. Functionally, mRNA cap-binding component of the eukaryotic translation initiation factor 3 (eIF-3) complex, which is involved in protein synthesis of a specialized repertoire of mRNAs and, together with other initiation factors, stimulates binding of mRNA and methionyl-tRNAi to the 40S ribosome. The eIF-3 complex specifically targets and initiates translation of a subset of mRNAs involved in cell proliferation. In the eIF-3 complex, eif3d specifically recognizes and binds the 7-methylguanosine cap of a subset of mRNAs. The sequence is that of Eukaryotic translation initiation factor 3 subunit D from Coccidioides immitis (strain RS) (Valley fever fungus).